We begin with the raw amino-acid sequence, 316 residues long: D-alanine--D-alanine ligase (316 aa).

Residues 104–303 enclose the ATP-grasp domain; sequence KRVWLQHGLP…YADLCVAILA (200 aa). 130 to 185 lines the ATP pocket; it reads PDRLGLPLILKPPHEGSTVGITKVAGYSDMKAAYELAARFDAEVLAEQFITGRELT. Residues D257, E270, and N272 each contribute to the Mg(2+) site.

This sequence belongs to the D-alanine--D-alanine ligase family. The cofactor is Mg(2+). It depends on Mn(2+) as a cofactor.

Its subcellular location is the cytoplasm. The catalysed reaction is 2 D-alanine + ATP = D-alanyl-D-alanine + ADP + phosphate + H(+). It participates in cell wall biogenesis; peptidoglycan biosynthesis. Functionally, cell wall formation. The protein is D-alanine--D-alanine ligase of Bordetella bronchiseptica (strain ATCC BAA-588 / NCTC 13252 / RB50) (Alcaligenes bronchisepticus).